The sequence spans 501 residues: MPRRPSGGGGGAGPAAAAVRKVPLRKLLRAASVACGVQFGWALQLSLLTPYVQELGIPHAFASLVWLCGPLSGLLVQPLVGHLSDRIAPAASPLGRRRPFIAAGAASIAAAVLTVGFSADLGRIFGDSITPGSTRLGAIIVYLVGFWLLDVGNNATQGPCRAFLADLTENDPRRTRIANAYFSLFMALGNILGYATGAYSGWYKIFPFTVTPSCSISCANLKSAFLLDIIILVVTTCITVASVQEPQSFGSDEADHPSTEQEAFLWELFGSFRYFTLPVWMVLIVTALTWIGWFPFILFDTDWMGREIYRGSPDDPSITQSYHDGVRMGSFGLMLNSVLLGFTSIVLEKLCRKWGAGLVWGVSNILMALCFVAMLVITYVAKNMDYPPSGVPPTGIVIASLVVFTILGAPLAITYSIPYAMAASRVENLGLGQGLAMGILNLAIVIPQVIVSLGSGPWDQLFGGGNAPAFAVAAAASFIGGLVAILGLPRARIASRRRGHR.

At 1 to 31 the chain is on the cytoplasmic side; sequence MPRRPSGGGGGAGPAAAAVRKVPLRKLLRAA. Residues 32–52 form a helical membrane-spanning segment; that stretch reads SVACGVQFGWALQLSLLTPYV. At 53 to 55 the chain is on the extracellular side; the sequence is QEL. The chain crosses the membrane as a helical span at residues 56–76; the sequence is GIPHAFASLVWLCGPLSGLLV. Topologically, residues 77–98 are cytoplasmic; sequence QPLVGHLSDRIAPAASPLGRRR. The chain crosses the membrane as a helical span at residues 99 to 119; that stretch reads PFIAAGAASIAAAVLTVGFSA. Residues 120-135 lie on the Extracellular side of the membrane; that stretch reads DLGRIFGDSITPGSTR. A helical membrane pass occupies residues 136–156; it reads LGAIIVYLVGFWLLDVGNNAT. Residues 157 to 176 lie on the Cytoplasmic side of the membrane; that stretch reads QGPCRAFLADLTENDPRRTR. A helical transmembrane segment spans residues 177–197; it reads IANAYFSLFMALGNILGYATG. Residues 198–222 are Extracellular-facing; it reads AYSGWYKIFPFTVTPSCSISCANLK. The chain crosses the membrane as a helical span at residues 223–243; sequence SAFLLDIIILVVTTCITVASV. The Cytoplasmic segment spans residues 244–278; it reads QEPQSFGSDEADHPSTEQEAFLWELFGSFRYFTLP. Residues 279-299 form a helical membrane-spanning segment; that stretch reads VWMVLIVTALTWIGWFPFILF. Over 300–327 the chain is Extracellular; that stretch reads DTDWMGREIYRGSPDDPSITQSYHDGVR. A helical transmembrane segment spans residues 328–348; it reads MGSFGLMLNSVLLGFTSIVLE. Residues 349–356 are Cytoplasmic-facing; that stretch reads KLCRKWGA. The helical transmembrane segment at 357-377 threads the bilayer; the sequence is GLVWGVSNILMALCFVAMLVI. Over 378 to 394 the chain is Extracellular; sequence TYVAKNMDYPPSGVPPT. A helical membrane pass occupies residues 395 to 415; it reads GIVIASLVVFTILGAPLAITY. At 416–433 the chain is on the cytoplasmic side; it reads SIPYAMAASRVENLGLGQ. Residues 434–454 traverse the membrane as a helical segment; the sequence is GLAMGILNLAIVIPQVIVSLG. Over 455 to 467 the chain is Extracellular; the sequence is SGPWDQLFGGGNA. Residues 468–488 form a helical membrane-spanning segment; it reads PAFAVAAAASFIGGLVAILGL. Topologically, residues 489–501 are cytoplasmic; that stretch reads PRARIASRRRGHR.

Belongs to the glycoside-pentoside-hexuronide (GPH) cation symporter transporter (TC 2.A.2.4) family. Homodimer. In terms of tissue distribution, widely expressed.

Its subcellular location is the cell membrane. It functions in the pathway glycan biosynthesis; sucrose metabolism. Its function is as follows. Responsible for the transport of sucrose into the cell, with the concomitant uptake of protons (symport system). May also transport other glucosides. This Oryza sativa subsp. japonica (Rice) protein is Sucrose transport protein SUT2 (SUT2).